A 152-amino-acid chain; its full sequence is Methylglyoxal synthase (152 aa).

The MGS-like domain occupies Arg-6–Lys-152. Residues His-19, Lys-23, Thr-45–Thr-48, and Ser-65–Gly-66 contribute to the substrate site. Catalysis depends on Asp-71, which acts as the Proton donor/acceptor. His-98 provides a ligand contact to substrate.

This sequence belongs to the methylglyoxal synthase family.

The catalysed reaction is dihydroxyacetone phosphate = methylglyoxal + phosphate. In terms of biological role, catalyzes the formation of methylglyoxal from dihydroxyacetone phosphate. The sequence is that of Methylglyoxal synthase from Proteus mirabilis (strain HI4320).